Reading from the N-terminus, the 115-residue chain is Large ribosomal subunit protein bL20c (115 aa).

Belongs to the bacterial ribosomal protein bL20 family.

It localises to the plastid. The protein resides in the chloroplast. Its function is as follows. Binds directly to 23S ribosomal RNA and is necessary for the in vitro assembly process of the 50S ribosomal subunit. It is not involved in the protein synthesizing functions of that subunit. In Mesostigma viride (Green alga), this protein is Large ribosomal subunit protein bL20c (rpl20).